Reading from the N-terminus, the 470-residue chain is Aminodeoxychorismate synthase component 1 (470 aa).

This sequence belongs to the anthranilate synthase component I family. In terms of assembly, monomer. Heterodimer consisting of two non-identical subunits: a glutamine amidotransferase subunit (PabA) and a aminodeoxychorismate synthase subunit (PabB). Mg(2+) is required as a cofactor.

It carries out the reaction chorismate + L-glutamine = 4-amino-4-deoxychorismate + L-glutamate. It participates in cofactor biosynthesis; tetrahydrofolate biosynthesis; 4-aminobenzoate from chorismate: step 1/2. Functionally, part of a heterodimeric complex that catalyzes the two-step biosynthesis of 4-amino-4-deoxychorismate (ADC), a precursor of p-aminobenzoate (PABA) and tetrahydrofolate. In the first step, a glutamine amidotransferase (PabA) generates ammonia as a substrate that, along with chorismate, is used in the second step, catalyzed by aminodeoxychorismate synthase (PabB) to produce ADC. In Bacillus subtilis (strain 168), this protein is Aminodeoxychorismate synthase component 1 (pabB).